The following is a 995-amino-acid chain: tRNA wybutosine-synthesizing protein 2/3/4 (995 aa).

The segment at 1 to 212 (MDFEKRKAAT…GFSVALASNG (212 aa)) is tRNA wybutosine-synthesizing protein 3 homolog. Kelch repeat units follow at residues 284–335 (EVIV…MVGD), 336–386 (FMFV…SVGT), 387–436 (KVYI…AYGS), 437–486 (QSFM…VYKH), and 488–535 (IGII…SILG). Residues 661–995 (ERSEENNLTK…RHLVADVRCR (335 aa)) form a tRNA wybutosine-synthesizing protein 2 homolog region. S-adenosyl-L-methionine contacts are provided by residues K828 and 896–897 (DN).

This sequence in the C-terminal section; belongs to the class I-like SAM-binding methyltransferase superfamily. TRM5/TYW2 family. It in the N-terminal section; belongs to the TYW3 family.

The enzyme catalyses 4-demethyl-7-[(3S)-3-amino-3-carboxypropyl]wyosine(37) in tRNA(Phe) + S-adenosyl-L-methionine = 7-[(3S)-3-amino-3-carboxypropyl]wyosine(37) in tRNA(Phe) + S-adenosyl-L-homocysteine + H(+). It catalyses the reaction 4-demethylwyosine(37) in tRNA(Phe) + S-adenosyl-L-methionine = 4-demethyl-7-[(3S)-3-amino-3-carboxypropyl]wyosine(37) in tRNA(Phe) + S-methyl-5'-thioadenosine + H(+). The protein operates within tRNA modification; wybutosine-tRNA(Phe) biosynthesis. Its function is as follows. S-adenosyl-L-methionine-dependent transferase that acts as a component of the wybutosine biosynthesis pathway. Wybutosine is a hyper modified guanosine with a tricyclic base found at the 3'-position adjacent to the anticodon of eukaryotic phenylalanine tRNA. The protein is tRNA wybutosine-synthesizing protein 2/3/4 of Arabidopsis thaliana (Mouse-ear cress).